The chain runs to 95 residues: Aspartyl/glutamyl-tRNA(Asn/Gln) amidotransferase subunit C (95 aa).

The protein belongs to the GatC family. As to quaternary structure, heterotrimer of A, B and C subunits.

The enzyme catalyses L-glutamyl-tRNA(Gln) + L-glutamine + ATP + H2O = L-glutaminyl-tRNA(Gln) + L-glutamate + ADP + phosphate + H(+). The catalysed reaction is L-aspartyl-tRNA(Asn) + L-glutamine + ATP + H2O = L-asparaginyl-tRNA(Asn) + L-glutamate + ADP + phosphate + 2 H(+). In terms of biological role, allows the formation of correctly charged Asn-tRNA(Asn) or Gln-tRNA(Gln) through the transamidation of misacylated Asp-tRNA(Asn) or Glu-tRNA(Gln) in organisms which lack either or both of asparaginyl-tRNA or glutaminyl-tRNA synthetases. The reaction takes place in the presence of glutamine and ATP through an activated phospho-Asp-tRNA(Asn) or phospho-Glu-tRNA(Gln). In Acetivibrio thermocellus (strain ATCC 27405 / DSM 1237 / JCM 9322 / NBRC 103400 / NCIMB 10682 / NRRL B-4536 / VPI 7372) (Clostridium thermocellum), this protein is Aspartyl/glutamyl-tRNA(Asn/Gln) amidotransferase subunit C.